The sequence spans 513 residues: Membrane-bound transcription factor site-2 protease homolog (513 aa).

Residues 1-60 (MEISGRRMRRFRMRFRRDHLTGGENIENEASCCYCDLKISNFNEPIFRLGRRFSGVLKVW) are Cytoplasmic-facing. A helical transmembrane segment spans residues 61–81 (FSIGLGFGVASLILVTVFLLL). Topologically, residues 82–107 (QFHSNPLFSNRLTSAVFGFSPSTRVS) are lumenal. A helical transmembrane segment spans residues 108-128 (LSGIAYVLVSTVITVSVHELG). Zn(2+) is bound at residue histidine 125. Glutamate 126 is an active-site residue. Residue histidine 129 participates in Zn(2+) binding. Topologically, residues 129-137 (HALAAASEG) are cytoplasmic. A helical membrane pass occupies residues 138–158 (IQMEYIAVFIAAIFPGGLVAF). The Lumenal portion of the chain corresponds to 159–182 (DNDVLQSLPSFNALRIYCAGIWHN). Residues 183 to 203 (AVFCALCVFALFLLPVMLSPF) traverse the membrane as a helical segment. Over 204-437 (YKHGESLTVV…KSFPNILERS (234 aa)) the chain is Cytoplasmic. A helical transmembrane segment spans residues 438 to 458 (LTCTFHVSLALVLLNSLPVYY). Over 459-485 (LDGESILESSLQSFTWLSPRKKKKALQ) the chain is Lumenal. Residues 486-506 (VCLVGGSLLSFLAFFRIFLLG) traverse the membrane as a helical segment. Over 507-513 (LPLSRRW) the chain is Cytoplasmic.

This sequence belongs to the peptidase M50A family. Requires Zn(2+) as cofactor. As to expression, expressed in the vasculature of roots, cotyledons and leaves.

It localises to the golgi apparatus membrane. In terms of biological role, metalloprotease that catalyzes the second step (site-2 cleavage) in the proteolytic activation of various factors, after site-1 cleavage. Part of a regulated intramembrane proteolysis (RIP) cascade. After ER stress, cleaves BZIP17 and BZIP28 proteins which function as stress sensors and transducers in ER stress signaling pathway. The N-terminal bZIP component is translocated to the nucleus, where it activates the expression and production of ER chaperones, as well as proteins involved in brassinosteroid (BR) signaling, which is required for stress acclimation and growth. This chain is Membrane-bound transcription factor site-2 protease homolog (S2P), found in Arabidopsis thaliana (Mouse-ear cress).